The sequence spans 665 residues: Translation factor guf1, mitochondrial (665 aa).

The transit peptide at 1 to 40 directs the protein to the mitochondrion; the sequence is MRGCLQLARWLSAAPTRPAASHWPGLCAAPRFFSHSAILR. A tr-type G domain is found at 67 to 247; the sequence is ERYRNFCIVA…TVVDKIPAPI (181 aa). Residues 76 to 83, 140 to 144, and 194 to 197 each bind GTP; these read AHVDHGKS, DTPGH, and NKVD.

It belongs to the TRAFAC class translation factor GTPase superfamily. Classic translation factor GTPase family. LepA subfamily.

Its subcellular location is the mitochondrion inner membrane. The catalysed reaction is GTP + H2O = GDP + phosphate + H(+). Promotes mitochondrial protein synthesis. May act as a fidelity factor of the translation reaction, by catalyzing a one-codon backward translocation of tRNAs on improperly translocated ribosomes. Binds to mitochondrial ribosomes in a GTP-dependent manner. The sequence is that of Translation factor guf1, mitochondrial (guf1) from Aspergillus terreus (strain NIH 2624 / FGSC A1156).